A 54-amino-acid chain; its full sequence is uncharacterized protein (54 aa).

Residues 1–54 (MSKKSTPMTKDAASRIQSSAAKSGGDVSSGSFASRAQSAAAINANNTSNSTGKK) are disordered. The span at 28–54 (SSGSFASRAQSAAAINANNTSNSTGKK) shows a compositional bias: low complexity.

This is an uncharacterized protein from Dictyostelium discoideum (Social amoeba).